Consider the following 492-residue polypeptide: Cysteine--tRNA ligase (492 aa).

Cysteine 29 provides a ligand contact to Zn(2+). The 'HIGH' region motif lies at 31–41 (LTTSDPPHLGH). Residues cysteine 229, histidine 254, and glutamate 258 each contribute to the Zn(2+) site. The 'KMSKS' region motif lies at 286–290 (KMSSS).

This sequence belongs to the class-I aminoacyl-tRNA synthetase family. Zn(2+) serves as cofactor.

The protein resides in the cytoplasm. It catalyses the reaction tRNA(Cys) + L-cysteine + ATP = L-cysteinyl-tRNA(Cys) + AMP + diphosphate. This Haloarcula marismortui (strain ATCC 43049 / DSM 3752 / JCM 8966 / VKM B-1809) (Halobacterium marismortui) protein is Cysteine--tRNA ligase.